A 502-amino-acid polypeptide reads, in one-letter code: Lysine--tRNA ligase (502 aa).

Residues E413 and E420 each contribute to the Mg(2+) site.

This sequence belongs to the class-II aminoacyl-tRNA synthetase family. Homodimer. Mg(2+) serves as cofactor.

The protein resides in the cytoplasm. The catalysed reaction is tRNA(Lys) + L-lysine + ATP = L-lysyl-tRNA(Lys) + AMP + diphosphate. The sequence is that of Lysine--tRNA ligase from Aromatoleum aromaticum (strain DSM 19018 / LMG 30748 / EbN1) (Azoarcus sp. (strain EbN1)).